The following is a 241-amino-acid chain: Phosphoribosylaminoimidazole-succinocarboxamide synthase (241 aa).

The protein belongs to the SAICAR synthetase family.

It carries out the reaction 5-amino-1-(5-phospho-D-ribosyl)imidazole-4-carboxylate + L-aspartate + ATP = (2S)-2-[5-amino-1-(5-phospho-beta-D-ribosyl)imidazole-4-carboxamido]succinate + ADP + phosphate + 2 H(+). The protein operates within purine metabolism; IMP biosynthesis via de novo pathway; 5-amino-1-(5-phospho-D-ribosyl)imidazole-4-carboxamide from 5-amino-1-(5-phospho-D-ribosyl)imidazole-4-carboxylate: step 1/2. In Latilactobacillus sakei subsp. sakei (strain 23K) (Lactobacillus sakei subsp. sakei), this protein is Phosphoribosylaminoimidazole-succinocarboxamide synthase.